The sequence spans 578 residues: Arginine--tRNA ligase (578 aa).

A 'HIGH' region motif is present at residues 127 to 137 (PNLAKEMHVGH).

It belongs to the class-I aminoacyl-tRNA synthetase family. As to quaternary structure, monomer.

The protein localises to the cytoplasm. It carries out the reaction tRNA(Arg) + L-arginine + ATP = L-arginyl-tRNA(Arg) + AMP + diphosphate. The polypeptide is Arginine--tRNA ligase (Pseudomonas putida (strain ATCC 700007 / DSM 6899 / JCM 31910 / BCRC 17059 / LMG 24140 / F1)).